Reading from the N-terminus, the 229-residue chain is Small ribosomal subunit protein uS5 (229 aa).

An S5 DRBM domain is found at 61–124 (LEEQVLDVKL…AHAKLSLIKV (64 aa)).

It belongs to the universal ribosomal protein uS5 family. In terms of assembly, part of the 30S ribosomal subunit. Contacts protein S4.

With S4 and S12 plays an important role in translational accuracy. The protein is Small ribosomal subunit protein uS5 of Methanococcus maripaludis (strain C7 / ATCC BAA-1331).